Reading from the N-terminus, the 210-residue chain is Large ribosomal subunit protein uL4 (210 aa).

The segment at 46 to 96 (QGNASTKTRAEVRGGGRKPWRQKGTGRARAGSNRSPLWRGGGVIFGPKPRD) is disordered. The segment covering 60 to 71 (GGRKPWRQKGTG) has biased composition (basic residues).

The protein belongs to the universal ribosomal protein uL4 family. In terms of assembly, part of the 50S ribosomal subunit.

In terms of biological role, one of the primary rRNA binding proteins, this protein initially binds near the 5'-end of the 23S rRNA. It is important during the early stages of 50S assembly. It makes multiple contacts with different domains of the 23S rRNA in the assembled 50S subunit and ribosome. Forms part of the polypeptide exit tunnel. The protein is Large ribosomal subunit protein uL4 of Gloeothece citriformis (strain PCC 7424) (Cyanothece sp. (strain PCC 7424)).